A 275-amino-acid polypeptide reads, in one-letter code: MTLQQEIIQALGAKPHINPEEEIRRSVDFLKAYLKTYPFLKSLVLGISGGQDSTLAGKLSQMAIAELREETGDNALQFIAVRLPYGVQADEQDCQDAIAFIQPDRVLTVNIKGAVLASEQALREAGIELSDFVRGNEKARERMKAQYSIAGMTHGVVVGTDHAAEAITGFFTKYGDGGTDINPLHRLNKRQGKQLLAALGCPEHLYKKVPTADLEDDRPSLPDEAALGVTYDNIDDYLEGKTLDPAIAKTIEGWYVKTEHKRRLPITVFDDFWKK.

46-53 (GISGGQDS) contacts ATP. D52 provides a ligand contact to Mg(2+). R140 is a binding site for deamido-NAD(+). T160 lines the ATP pocket. E165 contacts Mg(2+). Deamido-NAD(+) is bound by residues K173 and D180. Residues K189 and T211 each contribute to the ATP site. 260-261 (HK) lines the deamido-NAD(+) pocket.

This sequence belongs to the NAD synthetase family. Homodimer.

The enzyme catalyses deamido-NAD(+) + NH4(+) + ATP = AMP + diphosphate + NAD(+) + H(+). Its pathway is cofactor biosynthesis; NAD(+) biosynthesis; NAD(+) from deamido-NAD(+) (ammonia route): step 1/1. Functionally, catalyzes the ATP-dependent amidation of deamido-NAD to form NAD. Uses ammonia as a nitrogen source. This Salmonella dublin (strain CT_02021853) protein is NH(3)-dependent NAD(+) synthetase.